The sequence spans 141 residues: Large ribosomal subunit protein uL11 (141 aa).

It belongs to the universal ribosomal protein uL11 family. Part of the ribosomal stalk of the 50S ribosomal subunit. Interacts with L10 and the large rRNA to form the base of the stalk. L10 forms an elongated spine to which L12 dimers bind in a sequential fashion forming a multimeric L10(L12)X complex. In terms of processing, one or more lysine residues are methylated.

Its function is as follows. Forms part of the ribosomal stalk which helps the ribosome interact with GTP-bound translation factors. The sequence is that of Large ribosomal subunit protein uL11 from Gloeothece citriformis (strain PCC 7424) (Cyanothece sp. (strain PCC 7424)).